We begin with the raw amino-acid sequence, 101 residues long: Replication restart protein PriB (101 aa).

Residues 1-101 form the SSB domain; sequence MTTNNLVLSG…IHAENVELKT (101 aa).

Belongs to the PriB family. In terms of assembly, homodimer. Interacts with PriA and DnaT. Component of the replication restart primosome. Primosome assembly occurs via a 'hand-off' mechanism. PriA binds to replication forks, subsequently PriB then DnaT bind; DnaT then displaces ssDNA to generate the helicase loading substrate.

Involved in the restart of stalled replication forks, which reloads the replicative helicase on sites other than the origin of replication; the PriA-PriB pathway is the major replication restart pathway. During primosome assembly it facilitates complex formation between PriA and DnaT on DNA; stabilizes PriA on DNA. Stimulates the DNA unwinding activity of PriA helicase. This chain is Replication restart protein PriB, found in Shewanella oneidensis (strain ATCC 700550 / JCM 31522 / CIP 106686 / LMG 19005 / NCIMB 14063 / MR-1).